A 479-amino-acid chain; its full sequence is Acetylcholine receptor subunit alpha-type acr-15 (479 aa).

An N-terminal signal peptide occupies residues 1–18; that stretch reads MLLPILLHFLLLITQLNG. The Extracellular portion of the chain corresponds to 19 to 230; the sequence is SPAEVRLIND…HLRRRTLYYS (212 aa). N60 and N92 each carry an N-linked (GlcNAc...) asparagine glycan. An intrachain disulfide couples C146 to C160. N-linked (GlcNAc...) asparagine glycosylation occurs at N200. C208 and C209 are joined by a disulfide. A helical transmembrane segment spans residues 231 to 251; that stretch reads FNLIAPVLLTMILVILGFTVS. The Cytoplasmic segment spans residues 252-257; the sequence is PETCEK. Residues 258–278 traverse the membrane as a helical segment; sequence VGLQISVSLAICIFLTIMSEL. Residues 279–285 are Extracellular-facing; that stretch reads TPQTSEA. A helical transmembrane segment spans residues 286 to 306; the sequence is VPLLGVFFHTCNFISVLATSF. Over 307 to 453 the chain is Cytoplasmic; that stretch reads TVYVQSFHFR…WRFAAIVVDR (147 aa). Residues 454-474 form a helical membrane-spanning segment; it reads LCLLAFSLLIVVVSIIIALRA. At 475–479 the chain is on the extracellular side; it reads PYLFA.

It belongs to the ligand-gated ion channel (TC 1.A.9) family. Acetylcholine receptor (TC 1.A.9.1) subfamily. In terms of tissue distribution, expressed in interneurons, motor neurons, pharyngeal neurons and muscles.

It localises to the cell membrane. Its subcellular location is the postsynaptic cell membrane. Its function is as follows. After binding acetylcholine, the AChR responds by an extensive change in conformation that affects all subunits and leads to opening of an ion-conducting channel across the plasma membrane. Activity is required in glutamatergic neurons to mediate nicotine-induced and nicotine-motivated behaviors. The protein is Acetylcholine receptor subunit alpha-type acr-15 of Caenorhabditis elegans.